The sequence spans 212 residues: MNTNIGIIDYGMGNLHSVQQSFKRLDQSIRIVKSPNDVHECNALILPGVGSFDPAMENLRRTDLIPKIKSWVKDGKPLLGICLGLQLIFESSEEGNSEGLGLLKGKVCNLPRNTKERIPHMGWSLLKQIKECPLLDNENTSRWMYFVHSYSAIPSPEDLAATVSFGDSEVTAIVWKDSLGACQFHPEKSGKSGQRLLSSWLKWLHEKNSDLS.

Residues Asn-4–Asp-210 form the Glutamine amidotransferase type-1 domain. The active-site Nucleophile is Cys-82. Catalysis depends on residues His-185 and Glu-187.

As to quaternary structure, heterodimer of HisH and HisF.

The protein localises to the cytoplasm. The catalysed reaction is 5-[(5-phospho-1-deoxy-D-ribulos-1-ylimino)methylamino]-1-(5-phospho-beta-D-ribosyl)imidazole-4-carboxamide + L-glutamine = D-erythro-1-(imidazol-4-yl)glycerol 3-phosphate + 5-amino-1-(5-phospho-beta-D-ribosyl)imidazole-4-carboxamide + L-glutamate + H(+). It catalyses the reaction L-glutamine + H2O = L-glutamate + NH4(+). Its pathway is amino-acid biosynthesis; L-histidine biosynthesis; L-histidine from 5-phospho-alpha-D-ribose 1-diphosphate: step 5/9. Its function is as follows. IGPS catalyzes the conversion of PRFAR and glutamine to IGP, AICAR and glutamate. The HisH subunit catalyzes the hydrolysis of glutamine to glutamate and ammonia as part of the synthesis of IGP and AICAR. The resulting ammonia molecule is channeled to the active site of HisF. This chain is Imidazole glycerol phosphate synthase subunit HisH, found in Prochlorococcus marinus (strain MIT 9211).